The following is a 411-amino-acid chain: tRNA (guanine(37)-N(1))-methyltransferase (411 aa).

S-adenosyl-L-methionine is bound by residues His216, 254–255, 282–283, and Asn303; these read DL and DG. A disordered region spans residues 391–411; that stretch reads ERQASKQDDPKRRKVAAENAA.

Belongs to the class I-like SAM-binding methyltransferase superfamily. TRM5/TYW2 family. As to quaternary structure, monomer.

Its subcellular location is the mitochondrion matrix. The protein resides in the nucleus. It is found in the cytoplasm. It carries out the reaction guanosine(37) in tRNA + S-adenosyl-L-methionine = N(1)-methylguanosine(37) in tRNA + S-adenosyl-L-homocysteine + H(+). Specifically methylates the N1 position of guanosine-37 in various cytoplasmic and mitochondrial tRNAs. Methylation is not dependent on the nature of the nucleoside 5' of the target nucleoside. This is the first step in the biosynthesis of wybutosine (yW), a modified base adjacent to the anticodon of tRNAs and required for accurate decoding. This chain is tRNA (guanine(37)-N(1))-methyltransferase, found in Phytophthora infestans (strain T30-4) (Potato late blight agent).